A 313-amino-acid chain; its full sequence is Homoserine O-succinyltransferase (313 aa).

Cysteine 142 (acyl-thioester intermediate) is an active-site residue. Residues lysine 163 and serine 192 each contribute to the substrate site. Histidine 235 (proton acceptor) is an active-site residue. The active site involves glutamate 237. Arginine 249 is a binding site for substrate.

The protein belongs to the MetA family.

It is found in the cytoplasm. It carries out the reaction L-homoserine + succinyl-CoA = O-succinyl-L-homoserine + CoA. It functions in the pathway amino-acid biosynthesis; L-methionine biosynthesis via de novo pathway; O-succinyl-L-homoserine from L-homoserine: step 1/1. In terms of biological role, transfers a succinyl group from succinyl-CoA to L-homoserine, forming succinyl-L-homoserine. The polypeptide is Homoserine O-succinyltransferase (Vibrio vulnificus (strain YJ016)).